A 120-amino-acid chain; its full sequence is C-C motif chemokine 27 (120 aa).

Residues 1–25 (MMEGLSPASSLPLLLLLLSPAPEAA) form the signal peptide. Cystine bridges form between C34-C63 and C35-C78.

This sequence belongs to the intercrine beta (chemokine CC) family. As to quaternary structure, monomer, dimer, and tetramer. Heparin avidly promotes oligomerization. Interacts with TNFAIP6 (via Link domain). Isoform 1 is predominantly expressed in placenta and weakly in skin. Isoform 2 is predominantly expressed in testes and brain, weakly in kidney and liver and even lower in heart and muscle. Low expression of both isoforms in other tissues.

It is found in the secreted. The protein localises to the nucleus. Its function is as follows. Chemotactic factor that attracts skin-associated memory T-lymphocytes. May play a role in mediating homing of lymphocytes to cutaneous sites. May play a role in cell migration during embryogenesis. Nuclear forms may facilitate cellular migration by inducing cytoskeletal relaxation. Binds to CCR10. The sequence is that of C-C motif chemokine 27 (Ccl27) from Mus musculus (Mouse).